We begin with the raw amino-acid sequence, 177 residues long: Inorganic pyrophosphatase (177 aa).

Lysine 30, arginine 44, and tyrosine 56 together coordinate substrate. Aspartate 66, aspartate 71, and aspartate 103 together coordinate Mg(2+). A substrate-binding site is contributed by tyrosine 142.

Belongs to the PPase family. As to quaternary structure, homohexamer. It depends on Mg(2+) as a cofactor.

It localises to the cytoplasm. The catalysed reaction is diphosphate + H2O = 2 phosphate + H(+). Catalyzes the hydrolysis of inorganic pyrophosphate (PPi) forming two phosphate ions. The sequence is that of Inorganic pyrophosphatase from Mesorhizobium japonicum (strain LMG 29417 / CECT 9101 / MAFF 303099) (Mesorhizobium loti (strain MAFF 303099)).